The primary structure comprises 320 residues: Eukaryotic translation initiation factor 3 subunit G (320 aa).

Residues 1-25 (MPTGDFDSKPSWADQVEEEGEDDKC) form a disordered region. Ser-8 and Ser-11 each carry phosphoserine. A phosphothreonine mark is found at Thr-38 and Thr-41. 4 positions are modified to phosphoserine: Ser-42, Ser-189, Ser-223, and Ser-264. Positions 209-234 (KTGKYVPPSLRDGASRRGESMQPNRR) are disordered. Over residues 221 to 234 (GASRRGESMQPNRR) the composition is skewed to basic and acidic residues. Positions 239–317 (ATIRVTNLSE…LILNVEWAKP (79 aa)) constitute an RRM domain.

The protein belongs to the eIF-3 subunit G family. Component of the eukaryotic translation initiation factor 3 (eIF-3) complex, which is composed of 13 subunits: EIF3A, EIF3B, EIF3C, EIF3D, EIF3E, EIF3F, EIF3G, EIF3H, EIF3I, EIF3J, EIF3K, EIF3L and EIF3M. The eIF-3 complex appears to include 3 stable modules: module A is composed of EIF3A, EIF3B, EIF3G and EIF3I; module B is composed of EIF3F, EIF3H, and EIF3M; and module C is composed of EIF3C, EIF3D, EIF3E, EIF3K and EIF3L. EIF3C of module C binds EIF3B of module A and EIF3H of module B, thereby linking the three modules. EIF3J is a labile subunit that binds to the eIF-3 complex via EIF3B. The eIF-3 complex interacts with RPS6KB1 under conditions of nutrient depletion. Mitogenic stimulation leads to binding and activation of a complex composed of FRAP1 and RAPTOR, leading to phosphorylation and release of RPS6KB1 and binding of EIF4B to eIF-3. Interacts (via C-terminus) with AIFM1 (via N-terminus). Interacts with DHX33; the interaction is independent of RNA. Phosphorylated. Phosphorylation is enhanced upon serum stimulation.

It is found in the cytoplasm. It localises to the nucleus. Its subcellular location is the perinuclear region. Its function is as follows. RNA-binding component of the eukaryotic translation initiation factor 3 (eIF-3) complex, which is required for several steps in the initiation of protein synthesis. The eIF-3 complex associates with the 40S ribosome and facilitates the recruitment of eIF-1, eIF-1A, eIF-2:GTP:methionyl-tRNAi and eIF-5 to form the 43S pre-initiation complex (43S PIC). The eIF-3 complex stimulates mRNA recruitment to the 43S PIC and scanning of the mRNA for AUG recognition. The eIF-3 complex is also required for disassembly and recycling of post-termination ribosomal complexes and subsequently prevents premature joining of the 40S and 60S ribosomal subunits prior to initiation. The eIF-3 complex specifically targets and initiates translation of a subset of mRNAs involved in cell proliferation, including cell cycling, differentiation and apoptosis, and uses different modes of RNA stem-loop binding to exert either translational activation or repression. This subunit can bind 18S rRNA. This is Eukaryotic translation initiation factor 3 subunit G from Bos taurus (Bovine).